Consider the following 520-residue polypeptide: GMP synthase [glutamine-hydrolyzing] (520 aa).

The Glutamine amidotransferase type-1 domain maps to 9–202 (KILILDFGSQ…VRQICGCTGQ (194 aa)). Catalysis depends on Cys86, which acts as the Nucleophile. Catalysis depends on residues His176 and Glu178. The GMPS ATP-PPase domain occupies 203–395 (WTPGQIIEDA…LGLPHPMVYR (193 aa)). 230–236 (SGGVDSS) contacts ATP.

Homodimer.

The enzyme catalyses XMP + L-glutamine + ATP + H2O = GMP + L-glutamate + AMP + diphosphate + 2 H(+). The protein operates within purine metabolism; GMP biosynthesis; GMP from XMP (L-Gln route): step 1/1. Catalyzes the synthesis of GMP from XMP. In Syntrophotalea carbinolica (strain DSM 2380 / NBRC 103641 / GraBd1) (Pelobacter carbinolicus), this protein is GMP synthase [glutamine-hydrolyzing].